Consider the following 161-residue polypeptide: NADH-quinone oxidoreductase subunit I (161 aa).

4Fe-4S ferredoxin-type domains lie at 53–82 and 92–121; these read RRYP…IEAE and TRYD…EGPN. Residues C62, C65, C68, C72, C101, C104, C107, and C111 each contribute to the [4Fe-4S] cluster site.

It belongs to the complex I 23 kDa subunit family. As to quaternary structure, NDH-1 is composed of 14 different subunits. Subunits NuoA, H, J, K, L, M, N constitute the membrane sector of the complex. Requires [4Fe-4S] cluster as cofactor.

Its subcellular location is the cell inner membrane. The catalysed reaction is a quinone + NADH + 5 H(+)(in) = a quinol + NAD(+) + 4 H(+)(out). Functionally, NDH-1 shuttles electrons from NADH, via FMN and iron-sulfur (Fe-S) centers, to quinones in the respiratory chain. The immediate electron acceptor for the enzyme in this species is believed to be ubiquinone. Couples the redox reaction to proton translocation (for every two electrons transferred, four hydrogen ions are translocated across the cytoplasmic membrane), and thus conserves the redox energy in a proton gradient. In Hyphomonas neptunium (strain ATCC 15444), this protein is NADH-quinone oxidoreductase subunit I.